Here is a 75-residue protein sequence, read N- to C-terminus: Large ribosomal subunit protein bL31 (75 aa).

Zn(2+) is bound by residues cysteine 16, cysteine 18, cysteine 36, and cysteine 39.

It belongs to the bacterial ribosomal protein bL31 family. Type A subfamily. Part of the 50S ribosomal subunit. Zn(2+) is required as a cofactor.

Binds the 23S rRNA. The polypeptide is Large ribosomal subunit protein bL31 (Desulforapulum autotrophicum (strain ATCC 43914 / DSM 3382 / VKM B-1955 / HRM2) (Desulfobacterium autotrophicum)).